Reading from the N-terminus, the 2118-residue chain is Separin (2118 aa).

Serine 1121 bears the Phosphoserine mark. Basic residues predominate over residues 1309–1318 (KCSGRGRRRI). The disordered stretch occupies residues 1309-1352 (KCSGRGRRRIASVPPPLHNSSQKGLEEEGPPCTPKPPGRARQAG). Phosphoserine occurs at positions 1391 and 1394. The segment at 1408-1428 (EEPKRRGTASRTRGQTRKGRS) is disordered. Phosphoserine is present on serine 1504. Residues 1941 to 2036 (PQNTFYVLNP…SAALAVHGNL (96 aa)) enclose the Peptidase C50 domain. Cysteine 2025 is a catalytic residue.

As to quaternary structure, interacts with PTTG1. Interacts with RAD21. Autocleaves. This function, which is not essential for its protease activity, is unknown. Post-translationally, phosphorylated by CDK1. There is 8 Ser/Thr phosphorylation sites. Among them, only Ser-1121 phosphorylation is the major site, which conducts to the enzyme inactivation.

The protein resides in the cytoplasm. It localises to the nucleus. It catalyses the reaction All bonds known to be hydrolyzed by this endopeptidase have arginine in P1 and an acidic residue in P4. P6 is often occupied by an acidic residue or by a hydroxy-amino-acid residue, the phosphorylation of which enhances cleavage.. With respect to regulation, regulated by at least two independent mechanisms. First, it is inactivated via its interaction with securin/PTTG1, which probably covers its active site. The association with PTTG1 is not only inhibitory, since PTTG1 is also required for activating it, the enzyme being inactive in cells in which PTTG1 is absent. PTTG1 degradation at anaphase, liberates it and triggers RAD21 cleavage. Second, phosphorylation at Ser-1121 inactivates it. The complete phosphorylation during mitosis, is removed when cells undergo anaphase. Activation of the enzyme at the metaphase-anaphase transition probably requires the removal of both securin and inhibitory phosphate. Its function is as follows. Caspase-like protease, which plays a central role in the chromosome segregation by cleaving the SCC1/RAD21 subunit of the cohesin complex at the onset of anaphase. During most of the cell cycle, it is inactivated by different mechanisms. The polypeptide is Separin (Espl1) (Mus musculus (Mouse)).